The primary structure comprises 205 residues: NADH-quinone oxidoreductase subunit J (205 aa).

5 helical membrane-spanning segments follow: residues 1-21, 26-46, 54-74, 89-109, and 142-162; these read MPIFFYLFTTLIIISSLCVVL, VYSVLWLIFTFINAAGLMILL, LLIVIYVGAVAVLFLFVIMML, LSLSIFITLIMFVDLVITVIL, and FMLPFQMAGLILFVAMISCIT.

Belongs to the complex I subunit 6 family.

It localises to the cell membrane. The catalysed reaction is a quinone + NADH + 5 H(+)(in) = a quinol + NAD(+) + 4 H(+)(out). Functionally, NDH-1 shuttles electrons from NADH, via FMN and iron-sulfur (Fe-S) centers, to quinones in the respiratory chain. Couples the redox reaction to proton translocation (for every two electrons transferred, four hydrogen ions are translocated across the cytoplasmic membrane), and thus conserves the redox energy in a proton gradient. The polypeptide is NADH-quinone oxidoreductase subunit J (nuoJ) (Rickettsia typhi (strain ATCC VR-144 / Wilmington)).